Here is a 512-residue protein sequence, read N- to C-terminus: Mesoderm induction early response protein 1 (512 aa).

Low complexity predominate over residues 1 to 16; it reads MAEPSVESSSPGGSAT. Disordered stretches follow at residues 1–63 and 75–173; these read MAEP…REGD and YGST…EDYI. Ser-10 carries the phosphoserine modification. Over residues 17–36 the composition is skewed to basic and acidic residues; the sequence is SDDHEFDPSADMLVHDFDDE. Acidic residues-rich tracts occupy residues 37–46 and 83–105; these read RTLEEEEMME and EEDEEEEEEEEEGEDDEDADNDD. The span at 129–144 shows a compositional bias: polar residues; that stretch reads QSSNDDPSQSVASQDA. Position 141 is a phosphoserine (Ser-141). Tyr-155 carries the post-translational modification Phosphotyrosine. Phosphoserine is present on residues Ser-160 and Ser-166. Positions 160-173 are enriched in acidic residues; sequence SEVEEESEEDEDYI. In terms of domain architecture, ELM2 spans 180–278; it reads KEIMVGSMFQ…EALRRLRFNV (99 aa). Residues 180 to 284 are interaction with HDAC1; sequence KEIMVGSMFQ…RFNVKAAREE (105 aa). Lys-239 is covalently cross-linked (Glycyl lysine isopeptide (Lys-Gly) (interchain with G-Cter in SUMO2)). An SANT domain is found at 283–335; it reads EELSVWTEEECRNFEQGLKAYGKDFHLIQANKVRTRSVGECVAFYYMWKKSER. The tract at residues 366–512 is disordered; sequence ESESAASSRA…KFEELENTDD (147 aa). A phosphoserine mark is found at Ser-367, Ser-369, and Ser-377. The segment covering 396–409 has biased composition (polar residues); the sequence is TVSTANQNGVSSNG. The segment covering 414–423 has biased composition (basic and acidic residues); that stretch reads LNKEEVKVEG. Residue Lys-420 forms a Glycyl lysine isopeptide (Lys-Gly) (interchain with G-Cter in SUMO2) linkage. A Phosphothreonine modification is found at Thr-448. Basic and acidic residues predominate over residues 462–475; sequence ARNENDFDEKSERP. Over residues 482–494 the composition is skewed to polar residues; it reads NSNGKESPGSSEF. Phosphoserine occurs at positions 483, 488, and 491.

As to quaternary structure, interacts with HDAC1. Part of a complex containing at least CDYL, MIER1, MIER2, HDAC1 and HDAC2. In terms of tissue distribution, ubiquitously expressed, but at very low levels. However, consistent level of expression are observed in heart, testis, thyroid, ovary and adrenal gland. Transcripts are up-regulated in breast carcinoma cell lines and tumor.

The protein resides in the nucleus. Its subcellular location is the cytoplasm. In terms of biological role, transcriptional repressor regulating the expression of a number of genes including SP1 target genes. Probably functions through recruitment of HDAC1 a histone deacetylase involved in chromatin silencing. The polypeptide is Mesoderm induction early response protein 1 (MIER1) (Homo sapiens (Human)).